Here is a 472-residue protein sequence, read N- to C-terminus: Membrane-bound lytic murein transglycosylase F (472 aa).

The signal sequence occupies residues 1 to 24; the sequence is MRLLVIFLLALLLMACKEAPKPLA. The tract at residues 25–259 is non-LT domain; the sequence is DPRTTKEIIV…HLIDRYYGHA (235 aa). The segment at 260–472 is LT domain; sequence DRLKPVDVTT…NGFGNTLSQE (213 aa). Glu-306 is a catalytic residue.

It in the N-terminal section; belongs to the bacterial solute-binding protein 3 family. This sequence in the C-terminal section; belongs to the transglycosylase Slt family.

Its subcellular location is the cell outer membrane. It catalyses the reaction Exolytic cleavage of the (1-&gt;4)-beta-glycosidic linkage between N-acetylmuramic acid (MurNAc) and N-acetylglucosamine (GlcNAc) residues in peptidoglycan, from either the reducing or the non-reducing ends of the peptidoglycan chains, with concomitant formation of a 1,6-anhydrobond in the MurNAc residue.. Murein-degrading enzyme that degrades murein glycan strands and insoluble, high-molecular weight murein sacculi, with the concomitant formation of a 1,6-anhydromuramoyl product. Lytic transglycosylases (LTs) play an integral role in the metabolism of the peptidoglycan (PG) sacculus. Their lytic action creates space within the PG sacculus to allow for its expansion as well as for the insertion of various structures such as secretion systems and flagella. The protein is Membrane-bound lytic murein transglycosylase F of Methylobacillus flagellatus (strain ATCC 51484 / DSM 6875 / VKM B-1610 / KT).